Consider the following 316-residue polypeptide: Glutathione synthetase (316 aa).

Positions 125–311 (KLFTAWFPEL…ITGMLMNAIE (187 aa)) constitute an ATP-grasp domain. 151-207 (HQKHGDVIFKPLDGMGGASIFRLKKDDPNVGVIIETLTEHGNRFCMAQNFLPAIKEG) is a binding site for ATP. 2 residues coordinate Mg(2+): Glu281 and Asn283.

The protein belongs to the prokaryotic GSH synthase family. Mg(2+) serves as cofactor. Requires Mn(2+) as cofactor.

It catalyses the reaction gamma-L-glutamyl-L-cysteine + glycine + ATP = glutathione + ADP + phosphate + H(+). The protein operates within sulfur metabolism; glutathione biosynthesis; glutathione from L-cysteine and L-glutamate: step 2/2. This is Glutathione synthetase from Photorhabdus laumondii subsp. laumondii (strain DSM 15139 / CIP 105565 / TT01) (Photorhabdus luminescens subsp. laumondii).